Consider the following 103-residue polypeptide: NADH-quinone oxidoreductase subunit K (103 aa).

A run of 3 helical transmembrane segments spans residues 6-26 (LAHY…GIFL), 32-52 (IVLL…FVAF), and 63-83 (VFVF…LAIL).

Belongs to the complex I subunit 4L family. NDH-1 is composed of 14 different subunits. Subunits NuoA, H, J, K, L, M, N constitute the membrane sector of the complex.

It localises to the cell inner membrane. The catalysed reaction is a quinone + NADH + 5 H(+)(in) = a quinol + NAD(+) + 4 H(+)(out). Functionally, NDH-1 shuttles electrons from NADH, via FMN and iron-sulfur (Fe-S) centers, to quinones in the respiratory chain. The immediate electron acceptor for the enzyme in this species is believed to be ubiquinone. Couples the redox reaction to proton translocation (for every two electrons transferred, four hydrogen ions are translocated across the cytoplasmic membrane), and thus conserves the redox energy in a proton gradient. The chain is NADH-quinone oxidoreductase subunit K from Ralstonia pickettii (strain 12D).